A 228-amino-acid polypeptide reads, in one-letter code: Ribulose-phosphate 3-epimerase (228 aa).

Ser12 contributes to the substrate binding site. Residues His37, Asp39, and His70 each coordinate a divalent metal cation. Catalysis depends on Asp39, which acts as the Proton acceptor. Substrate-binding positions include His70, Gly146 to Gly149, Asp176 to Gly178, and Gly198 to Ser199. Asp176 contributes to the a divalent metal cation binding site. Asp176 acts as the Proton donor in catalysis.

The protein belongs to the ribulose-phosphate 3-epimerase family. The cofactor is a divalent metal cation.

The enzyme catalyses D-ribulose 5-phosphate = D-xylulose 5-phosphate. It functions in the pathway carbohydrate degradation. Functionally, catalyzes the reversible epimerization of D-ribulose 5-phosphate to D-xylulose 5-phosphate. The protein is Ribulose-phosphate 3-epimerase of Rhodobacter capsulatus (Rhodopseudomonas capsulata).